We begin with the raw amino-acid sequence, 380 residues long: Cobalt-precorrin-5B C(1)-methyltransferase (380 aa).

It belongs to the CbiD family.

The catalysed reaction is Co-precorrin-5B + S-adenosyl-L-methionine = Co-precorrin-6A + S-adenosyl-L-homocysteine. It functions in the pathway cofactor biosynthesis; adenosylcobalamin biosynthesis; cob(II)yrinate a,c-diamide from sirohydrochlorin (anaerobic route): step 6/10. Catalyzes the methylation of C-1 in cobalt-precorrin-5B to form cobalt-precorrin-6A. The polypeptide is Cobalt-precorrin-5B C(1)-methyltransferase (Methanosphaera stadtmanae (strain ATCC 43021 / DSM 3091 / JCM 11832 / MCB-3)).